The chain runs to 491 residues: Protein DETOXIFICATION 20 (491 aa).

A run of 12 helical transmembrane segments spans residues 37–57 (LWVV…VSMV), 75–95 (ITFT…AGAL), 120–140 (IVLT…GPIL), 156–176 (LALW…CQMF), 185–205 (IISY…WLLV), 214–234 (GAMT…LLYV), 265–285 (GGML…TGNL), 296–316 (AICI…LAAV), 337–357 (LIAV…FLFL), 381–401 (LLAF…VAIG), 413–433 (LACY…VVGL), and 438–458 (VWIG…VMTL).

Belongs to the multi antimicrobial extrusion (MATE) (TC 2.A.66.1) family.

Its subcellular location is the membrane. The sequence is that of Protein DETOXIFICATION 20 from Arabidopsis thaliana (Mouse-ear cress).